A 158-amino-acid polypeptide reads, in one-letter code: Transcription elongation factor GreA (158 aa).

The protein belongs to the GreA/GreB family.

Its function is as follows. Necessary for efficient RNA polymerase transcription elongation past template-encoded arresting sites. The arresting sites in DNA have the property of trapping a certain fraction of elongating RNA polymerases that pass through, resulting in locked ternary complexes. Cleavage of the nascent transcript by cleavage factors such as GreA or GreB allows the resumption of elongation from the new 3'terminus. GreA releases sequences of 2 to 3 nucleotides. In Macrococcus caseolyticus (strain JCSC5402) (Macrococcoides caseolyticum), this protein is Transcription elongation factor GreA.